A 787-amino-acid chain; its full sequence is Protein smoothened (787 aa).

The N-terminal stretch at 1 to 27 (MAAARPARGPELPLLGLLLLLLLGDPG) is a signal peptide. Residues 28–233 (RGAASSGNAT…EAEHQDMHSY (206 aa)) are Extracellular-facing. The disordered stretch occupies residues 30–60 (AASSGNATGPGPRSAGGSARRSAAVTGPPPP). A glycan (N-linked (GlcNAc...) asparagine) is linked at Asn35. The span at 38–53 (GPGPRSAGGSARRSAA) shows a compositional bias: low complexity. Intrachain disulfides connect Cys64/Cys178, Cys70/Cys134, Cys78/Cys127, Cys118/Cys154, and Cys147/Cys169. In terms of domain architecture, FZ spans 65 to 181 (GRAAPCEPLR…DRFPEGCTNE (117 aa)). Asp95 contacts cholesterol. The N-linked (GlcNAc...) asparagine glycan is linked to Asn188. Disulfide bonds link Cys193–Cys213 and Cys217–Cys295. The helical transmembrane segment at 234–254 (IAAFGAVTGLCTLFTLATFVA) threads the bilayer. The Cytoplasmic portion of the chain corresponds to 255–262 (DWRNSNRY). A helical membrane pass occupies residues 263-283 (PAVILFYVNACFFVGSIGWLA). Topologically, residues 284-314 (QFMDGARREIVCRADGTMRLGEPTSNETLSC) are extracellular. The N-linked (GlcNAc...) asparagine glycan is linked to Asn309. Cysteines 314 and 390 form a disulfide. The helical transmembrane segment at 315 to 335 (VIIFVIVYYALMAGVVWFVVL) threads the bilayer. The Cytoplasmic segment spans residues 336–358 (TYAWHTSFKALGTTYQPLSGKTS). Residues 359-379 (YFHLLTWSLPFVLTVAILAVA) form a helical membrane-spanning segment. The Extracellular segment spans residues 380–402 (QVDGDSVSGICFVGYKNYRYRAG). Tyr394 provides a ligand contact to cholesterol. The chain crosses the membrane as a helical span at residues 403 to 423 (FVLAPIGLVLIVGGYFLIRGV). The Cytoplasmic portion of the chain corresponds to 424-451 (MTLFSIKSNHPGLLSEKAASKINETMLR). A helical transmembrane segment spans residues 452–472 (LGIFGFLAFGFVLITFSCHFY). Topologically, residues 473–524 (DFFNQAEWERSFRDYVLCQANVTIGLPTKQPIPDCEIKNRPSLLVEKINLFA) are extracellular. An intrachain disulfide couples Cys490 to Cys507. A helical membrane pass occupies residues 525–545 (MFGTGIAMSTWVWTKATLLIW). Residues 538 to 569 (TKATLLIWRRTWCRLTGQSDDEPKRIKKSKMI) form an interaction with BBS5 and BBS7 region. Over 546–787 (RRTWCRLTGQ…TELMDADSDF (242 aa)) the chain is Cytoplasmic. Phosphoserine is present on residues Ser556, Ser574, and Ser590. Positions 570–653 (AKAFSKRHEL…TPVPPEEQAN (84 aa)) are required for interaction with PRKACA. Residues 581–593 (QNPGQELSFSMHT) are interaction with DLG5. Position 593 is a phosphothreonine (Thr593). Phosphoserine is present on residues Ser595 and Ser638. Residues Thr640 and Thr644 each carry the phosphothreonine modification. Phosphoserine is present on Ser662. Positions 667 to 704 (KRLGRKKKRRKRKKEVCPLAPPPELHPPAPAPSTIPRL) are disordered. Basic residues predominate over residues 668–680 (RLGRKKKRRKRKK). Residues 685 to 699 (LAPPPELHPPAPAPS) are compositionally biased toward pro residues.

This sequence belongs to the G-protein coupled receptor Fz/Smo family. In terms of assembly, homodimer. Interacts (via C-terminus) with protein kinase A catalytic subunit PRKACA; interacts with free PRKACA subunits and the interaction leads to sequestration of PRKACA at the membrane, preventing PRKACA-mediated phosphorylation of GLI transcription factors. Interacts with ARRB2. Interacts with KIF7. Interacts with BBS5 and BBS7; the interactions are indicative for the association of SMO with the BBsome complex to facilitate ciliary localization of SMO. Interacts with DLG5 and SDCBP. Interacts with GAS8/DRC4. Phosphorylation by GRK kinases is required for interaction with protein kinase A catalytic subunit PRKACA.

The protein resides in the cell membrane. It is found in the cell projection. The protein localises to the cilium. G protein-coupled receptor which associates with the patched protein (PTCH) to transduce hedgehog protein signaling. Binding of sonic hedgehog (SHH) to its receptor patched prevents inhibition of smoothened (SMO) by patched. When active, SMO binds to and sequesters protein kinase A catalytic subunit PRKACA at the cell membrane, preventing PRKACA-mediated phosphorylation of GLI transcription factors which releases the GLI proteins from PRKACA-mediated inhibition and allows for transcriptional activation of hedgehog pathway target genes. Required for the accumulation of KIF7, GLI2 and GLI3 in the cilia. Interacts with DLG5 at the ciliary base to induce the accumulation of KIF7 and GLI2 at the ciliary tip for GLI2 activation. This is Protein smoothened (SMO) from Homo sapiens (Human).